Reading from the N-terminus, the 871-residue chain is Leucine--tRNA ligase (871 aa).

The 'HIGH' region signature appears at 43–53; that stretch reads PYPSGRIHIGH. The 'KMSKS' region motif lies at 629–633; it reads KMSKS. An ATP-binding site is contributed by Lys-632.

The protein belongs to the class-I aminoacyl-tRNA synthetase family.

The protein resides in the cytoplasm. It carries out the reaction tRNA(Leu) + L-leucine + ATP = L-leucyl-tRNA(Leu) + AMP + diphosphate. The chain is Leucine--tRNA ligase from Chelativorans sp. (strain BNC1).